We begin with the raw amino-acid sequence, 648 residues long: DNA ligase (648 aa).

Residues 30-34 (DEEYD) and 79-80 (SQ) each bind NAD(+). The active-site N6-AMP-lysine intermediate is the lysine 110. 4 residues coordinate NAD(+): arginine 131, glutamate 165, lysine 280, and lysine 304. Cysteine 398, cysteine 401, cysteine 414, and cysteine 419 together coordinate Zn(2+). The 76-residue stretch at 573–648 (VSENPFKNKT…LTEEEMNSLF (76 aa)) folds into the BRCT domain.

Belongs to the NAD-dependent DNA ligase family. LigA subfamily. Mg(2+) serves as cofactor. Requires Mn(2+) as cofactor.

The enzyme catalyses NAD(+) + (deoxyribonucleotide)n-3'-hydroxyl + 5'-phospho-(deoxyribonucleotide)m = (deoxyribonucleotide)n+m + AMP + beta-nicotinamide D-nucleotide.. In terms of biological role, DNA ligase that catalyzes the formation of phosphodiester linkages between 5'-phosphoryl and 3'-hydroxyl groups in double-stranded DNA using NAD as a coenzyme and as the energy source for the reaction. It is essential for DNA replication and repair of damaged DNA. In Aliarcobacter butzleri (strain RM4018) (Arcobacter butzleri), this protein is DNA ligase.